The following is a 92-amino-acid chain: Small ribosomal subunit protein uS19 (92 aa).

The protein belongs to the universal ribosomal protein uS19 family.

Its function is as follows. Protein S19 forms a complex with S13 that binds strongly to the 16S ribosomal RNA. This is Small ribosomal subunit protein uS19 from Brucella ovis (strain ATCC 25840 / 63/290 / NCTC 10512).